The primary structure comprises 372 residues: MMSVEHSANSQKKVIVGMSGGVDSSVSAYLLKQQGYQVEGLFMKNWEEDDNEEYCTAAEDLADAQAVCDKLGIPLHTINFAAEYWDNVFEYFLAEYKAGRTPNPDILCNKEIKFKAFLEFADEVLDADYIAMGHYVRRTFPQNGEKPQMLRGLDGNKDQSYFLYTLSHEQVARTLFPVGELEKPEVRRIAEEQGLITAKKKDSTGICFIGERKFTDFLSRYLPAQPGKIETPEGKVIGEHQGLMYHTLGQRKGLHIGGMKESSEQPWYVADKDLKRNVLIAVQGADHPLLKSHGLVAAQLHWVDRTPITEPVRCSVKTRYRQSDIACTIIPLSDDRIKVMFDEPQVAVTPGQSAVFYQGEICLGGGIIEERI.

ATP contacts are provided by residues 17-24 (GMSGGVDS) and Met43. Residues 103–105 (NPD) form an interaction with target base in tRNA region. The active-site Nucleophile is Cys108. Cys108 and Cys207 are joined by a disulfide. Residue Gly133 coordinates ATP. Positions 157-159 (KDQ) are interaction with tRNA. Residue Cys207 is the Cysteine persulfide intermediate of the active site. The interaction with tRNA stretch occupies residues 319-320 (RY).

It belongs to the MnmA/TRMU family.

The protein localises to the cytoplasm. The catalysed reaction is S-sulfanyl-L-cysteinyl-[protein] + uridine(34) in tRNA + AH2 + ATP = 2-thiouridine(34) in tRNA + L-cysteinyl-[protein] + A + AMP + diphosphate + H(+). Catalyzes the 2-thiolation of uridine at the wobble position (U34) of tRNA, leading to the formation of s(2)U34. In Vibrio cholerae serotype O1 (strain ATCC 39541 / Classical Ogawa 395 / O395), this protein is tRNA-specific 2-thiouridylase MnmA.